Here is a 197-residue protein sequence, read N- to C-terminus: Adenylate kinase (197 aa).

Residue 7 to 15 (ALPGSGKTT) coordinates ATP.

Belongs to the archaeal adenylate kinase family.

The protein localises to the cytoplasm. It carries out the reaction AMP + ATP = 2 ADP. The chain is Adenylate kinase (adkA) from Pyrobaculum aerophilum (strain ATCC 51768 / DSM 7523 / JCM 9630 / CIP 104966 / NBRC 100827 / IM2).